The chain runs to 220 residues: Phosphatidylserine decarboxylase proenzyme (220 aa).

Catalysis depends on serine 189, which acts as the Schiff-base intermediate with substrate; via pyruvic acid. At serine 189 the chain carries Pyruvic acid (Ser); by autocatalysis.

It belongs to the phosphatidylserine decarboxylase family. PSD-A subfamily. Heterodimer of a large membrane-associated beta subunit and a small pyruvoyl-containing alpha subunit. The cofactor is pyruvate. Post-translationally, is synthesized initially as an inactive proenzyme. Formation of the active enzyme involves a self-maturation process in which the active site pyruvoyl group is generated from an internal serine residue via an autocatalytic post-translational modification. Two non-identical subunits are generated from the proenzyme in this reaction, and the pyruvate is formed at the N-terminus of the alpha chain, which is derived from the carboxyl end of the proenzyme. The post-translation cleavage follows an unusual pathway, termed non-hydrolytic serinolysis, in which the side chain hydroxyl group of the serine supplies its oxygen atom to form the C-terminus of the beta chain, while the remainder of the serine residue undergoes an oxidative deamination to produce ammonia and the pyruvoyl prosthetic group on the alpha chain.

It is found in the cell membrane. It catalyses the reaction a 1,2-diacyl-sn-glycero-3-phospho-L-serine + H(+) = a 1,2-diacyl-sn-glycero-3-phosphoethanolamine + CO2. It participates in phospholipid metabolism; phosphatidylethanolamine biosynthesis; phosphatidylethanolamine from CDP-diacylglycerol: step 2/2. Its function is as follows. Catalyzes the formation of phosphatidylethanolamine (PtdEtn) from phosphatidylserine (PtdSer). In Pelobacter propionicus (strain DSM 2379 / NBRC 103807 / OttBd1), this protein is Phosphatidylserine decarboxylase proenzyme.